The primary structure comprises 247 residues: DNA-directed RNA polymerase subunit Rpo3 (247 aa).

The protein belongs to the archaeal Rpo3/eukaryotic RPB3 RNA polymerase subunit family. In terms of assembly, part of the RNA polymerase complex.

It is found in the cytoplasm. It carries out the reaction RNA(n) + a ribonucleoside 5'-triphosphate = RNA(n+1) + diphosphate. DNA-dependent RNA polymerase (RNAP) catalyzes the transcription of DNA into RNA using the four ribonucleoside triphosphates as substrates. In Natronomonas pharaonis (strain ATCC 35678 / DSM 2160 / CIP 103997 / JCM 8858 / NBRC 14720 / NCIMB 2260 / Gabara) (Halobacterium pharaonis), this protein is DNA-directed RNA polymerase subunit Rpo3.